The chain runs to 384 residues: H-2 class I histocompatibility antigen, TLA(B) alpha chain (384 aa).

Positions 1–26 (MRMGTPVPGTLLILLAASQGQTQTCP) are cleaved as a signal peptide. Positions 27–116 (GSHSLRYFYT…MLDYYNLSQN (90 aa)) are alpha-1. The Extracellular portion of the chain corresponds to 27-314 (GSHSLRYFYT…TSMPNRTTVR (288 aa)). Residues Asn63, Asn112, and Asn116 are each glycosylated (N-linked (GlcNAc...) asparagine). Positions 117 to 208 (GSHTIQVMYG…ENRKKTQECT (92 aa)) are alpha-2. 2 cysteine pairs are disulfide-bonded: Cys127-Cys190 and Cys229-Cys285. Residues 209-300 (DPPKTHVTHH…GLPEPLTLRW (92 aa)) form an alpha-3 region. The region spanning 211 to 299 (PKTHVTHHPR…EGLPEPLTLR (89 aa)) is the Ig-like C1-type domain. Residues 301–314 (EPPQTSMPNRTTVR) are connecting peptide. The N-linked (GlcNAc...) asparagine glycan is linked to Asn309. The helical transmembrane segment at 315–334 (ALLGAMIILGFMSGSVMMWM) threads the bilayer. The Cytoplasmic segment spans residues 335-384 (RKNNGGNGDDNTAAYQNEREHLSLDPRAESEALGVEAGMKDLPSAPPLVS). Positions 354 to 364 (EHLSLDPRAES) are enriched in basic and acidic residues. Residues 354–384 (EHLSLDPRAESEALGVEAGMKDLPSAPPLVS) form a disordered region.

The protein belongs to the MHC class I family. In terms of assembly, heterodimer of an alpha chain and a beta chain (beta-2-microglobulin). In terms of tissue distribution, TL antigens are only expressed on thymocytes, activated T-lymphocytes and on some thymic leukemias.

It is found in the membrane. In terms of biological role, involved in the presentation of foreign antigens to the immune system. The polypeptide is H-2 class I histocompatibility antigen, TLA(B) alpha chain (H2-T3) (Mus musculus (Mouse)).